The chain runs to 159 residues: uncharacterized protein (159 aa).

The next 4 helical transmembrane spans lie at 22-42 (LFSSSLYHSAFDCSFGISFTI), 45-65 (PIEYIVLSKPCFFAITPLLTL), 80-100 (IWVSTVTSLPISHCLIVSLSL), and 104-124 (FPSLFYSALVLSCLSLLCLAF).

The protein localises to the membrane. This is an uncharacterized protein from Schizosaccharomyces pombe (strain 972 / ATCC 24843) (Fission yeast).